Here is a 517-residue protein sequence, read N- to C-terminus: Fluconazole resistance protein 1 (517 aa).

The zn(2)-C6 fungal-type DNA-binding region spans 26-52 (CDSCRIKKTKCDGKKPCNRCTLDNKIC). Disordered regions lie at residues 106-137 (KSVD…QNST), 250-270 (SAQF…QQQQ), 284-307 (SDIE…PPTS), and 378-403 (GSIQ…VSSF). Over residues 113 to 124 (SSPASSTPNSSS) the composition is skewed to low complexity. A compositionally biased stretch (polar residues) spans 250–260 (SAQFSKGTFSP). Over residues 261–270 (QQQQLQQQQQ) the composition is skewed to low complexity. Over residues 298-307 (NSGSVSPPTS) the composition is skewed to polar residues. Residues 388–398 (GSVHKPVRNHS) show a composition bias toward basic residues.

The protein resides in the nucleus. Its function is as follows. Transcription factor that acts as a negative regulator of fluconazole resistance in C.albicans. Also confers fluconazole resistance in S.cerevisiae by activation of the PDR5 gene. The sequence is that of Fluconazole resistance protein 1 (FCR1) from Candida albicans (Yeast).